Reading from the N-terminus, the 404-residue chain is Intracellular hyaluronan-binding protein 4.L (404 aa).

Disordered stretches follow at residues 1 to 21 (MRLD…MQDN), 51 to 288 (LTRR…QEMS), and 359 to 379 (LTRP…REEA). A compositionally biased stretch (polar residues) spans 8–19 (ETPSSPVNTEMQ). Basic and acidic residues-rich tracts occupy residues 71–81 (GKKESQKDRKA), 145–159 (KVDR…REVR), and 165–184 (RSNE…DKQM). The segment covering 188 to 200 (GGRGGMRGRGRGG) has biased composition (gly residues). Composition is skewed to basic and acidic residues over residues 205 to 233 (TEND…DKRG) and 270 to 281 (EEHAKVPEEKNE).

Belongs to the SERBP1-HABP4 family. Associates with ribosomes; promoting ribosome stabilization. Interacts with eef2/eEF2; promoting ribosome stabilization.

The protein localises to the nucleus. It localises to the cytoplasm. Its subcellular location is the stress granule. The protein resides in the nucleolus. It is found in the nucleus speckle. The protein localises to the cajal body. Its function is as follows. Ribosome-binding protein that promotes ribosome hibernation, a process during which ribosomes are stabilized in an inactive state and preserved from proteasomal degradation. Acts via its association with eef2/eEF2 factor at the A-site of the ribosome, promoting ribosome stabilization in an inactive state compatible with storage. Plays a key role in ribosome hibernation in the mature egg by promoting ribosome stabilization. Ribosomes, which are produced in large quantities during oogenesis, are stored and translationally repressed in the egg and early embryo. This chain is Intracellular hyaluronan-binding protein 4.L, found in Xenopus laevis (African clawed frog).